A 223-amino-acid chain; its full sequence is MSFLVDLGATSYIACYATQQAVVARRCSGDLDRDCFLLTEHPPVYTLGKRGGEQHLHISKEMLAQKGIDVVSIERGGEITYHGPGQLVLYPILHLRKRKMRVTEYVGLLEETMIRLAADFGVRVVRNTRNAGVWTEDGRSKIGSIGIAIRHGVSFHGFAFNLNTDLEPFSWINPCGLTGVTATSLAREAGTDFDPAEVKKRLLSIVADLFGEFTVVDSLHSVK.

One can recognise a BPL/LPL catalytic domain in the interval 30–214; the sequence is DLDRDCFLLT…IVADLFGEFT (185 aa). Substrate contacts are provided by residues 75–82, 144–146, and 157–159; these read RGGEITYH, SIG, and GFA. Residue C175 is the Acyl-thioester intermediate of the active site.

Belongs to the LipB family.

The protein resides in the cytoplasm. It catalyses the reaction octanoyl-[ACP] + L-lysyl-[protein] = N(6)-octanoyl-L-lysyl-[protein] + holo-[ACP] + H(+). It functions in the pathway protein modification; protein lipoylation via endogenous pathway; protein N(6)-(lipoyl)lysine from octanoyl-[acyl-carrier-protein]: step 1/2. Catalyzes the transfer of endogenously produced octanoic acid from octanoyl-acyl-carrier-protein onto the lipoyl domains of lipoate-dependent enzymes. Lipoyl-ACP can also act as a substrate although octanoyl-ACP is likely to be the physiological substrate. This chain is Octanoyltransferase, found in Desulfotalea psychrophila (strain LSv54 / DSM 12343).